A 359-amino-acid chain; its full sequence is GTP cyclohydrolase FolE2 (359 aa).

The protein belongs to the GTP cyclohydrolase IV family.

The enzyme catalyses GTP + H2O = 7,8-dihydroneopterin 3'-triphosphate + formate + H(+). Its pathway is cofactor biosynthesis; 7,8-dihydroneopterin triphosphate biosynthesis; 7,8-dihydroneopterin triphosphate from GTP: step 1/1. Converts GTP to 7,8-dihydroneopterin triphosphate. This chain is GTP cyclohydrolase FolE2, found in Cereibacter sphaeroides (strain ATCC 17029 / ATH 2.4.9) (Rhodobacter sphaeroides).